The sequence spans 148 residues: Large ribosomal subunit protein bL9 (148 aa).

This sequence belongs to the bacterial ribosomal protein bL9 family.

In terms of biological role, binds to the 23S rRNA. The protein is Large ribosomal subunit protein bL9 of Methylobacillus flagellatus (strain ATCC 51484 / DSM 6875 / VKM B-1610 / KT).